A 147-amino-acid chain; its full sequence is MRLHDVKPQKGSKKRKKRVARGISAGQGASAGLGMRGQKSRSGSGTRPGFEGGQQPLYRRLPKLKGFPIVNQKIYTTINVEKLASLPANTEVTLASLKAAGILTAVKGPLKILGNGELSTPLKVQAAAFTGTARSKIEAAGGSCEVL.

The tract at residues 1–57 is disordered; that stretch reads MRLHDVKPQKGSKKRKKRVARGISAGQGASAGLGMRGQKSRSGSGTRPGFEGGQQPL. A compositionally biased stretch (basic residues) spans 10–20; sequence KGSKKRKKRVA.

The protein belongs to the universal ribosomal protein uL15 family. Part of the 50S ribosomal subunit.

Functionally, binds to the 23S rRNA. In Nostoc punctiforme (strain ATCC 29133 / PCC 73102), this protein is Large ribosomal subunit protein uL15.